The following is a 602-amino-acid chain: RNA-binding NOB1-like protein (602 aa).

A disordered region spans residues 1-25; the sequence is MDPKPTSMWSSIVKKDPPSKPPVND. Positions 48-134 constitute a PINc domain; sequence VVDANAIIEG…LKLIALSYTL (87 aa). Disordered regions lie at residues 258–278 and 301–331; these read SQGQ…VSRS and IQKD…GEDI. Positions 301-329 are enriched in basic and acidic residues; sequence IQKDQEADKARHTKEANETHAKDSGKNGE. Residues 331–365 are a coiled coil; sequence ISSILKDMRLEEESLRALQEETEETNAEATLINGE. The NOB1 zinc-finger motif lies at 452 to 522; sequence IRQLHRWILK…QYSIPMPKGG (71 aa). Zn(2+) contacts are provided by C462, C465, C477, and C480.

Belongs to the NOB1 family. Component of the small ribosomal subunit, ribosomal RNA processing complex (SSU RRP complex). As to expression, highly expressed in flowers and siliques and at lower levels in roots, hypocotyls, stems, leaves and seeds.

The protein localises to the nucleus. It localises to the nucleoplasm. It is found in the cytoplasm. Its function is as follows. Essential protein required during embryogenesis and pollen development. Endonuclease cleaving pre-rRNA at the 3' end of the mature 18S rRNA (D-site); cleaves 20S pre-rRNA in the cytoplasm. Required for processing of 20S pre-rRNA precursor and biogenesis of 40S ribosomal subunits. This is RNA-binding NOB1-like protein from Arabidopsis thaliana (Mouse-ear cress).